Consider the following 757-residue polypeptide: Inhibitor of nuclear factor kappa-B kinase subunit beta (757 aa).

The Protein kinase domain occupies 15–300 (WEMKERLGTG…DPQYGPNGCF (286 aa)). Residues 21–29 (LGTGGFGNV) and Lys44 each bind ATP. The active-site Proton acceptor is the Asp145. A Glycyl lysine isopeptide (Lys-Gly) (interchain with G-Cter in ubiquitin) cross-link involves residue Lys163. At Ser177 the chain carries Phosphoserine; by TBK1 and PKC/PRKCZ. Position 179 is an S-nitrosocysteine (Cys179). Residue Ser181 is modified to Phosphoserine; by TBK1, PKC/PRKCZ and PDPK1. A Hydroxyproline modification is found at Pro191. The segment at 458–479 (LLRNNSCLSKMKNAMASTAQQL) is leucine-zipper. Residue Ser670 is modified to Phosphoserine; by autocatalysis. Ser672 is modified (phosphoserine). Ser675, Ser682, Ser689, Ser692, Ser697, Ser705, Ser733, and Ser740 each carry phosphoserine; by autocatalysis. Residues 683-703 (HPGQLMSQPSSACDSLPESDK) form a disordered region. Residues 737–742 (LDWSWL) are NEMO-binding.

This sequence belongs to the protein kinase superfamily. Ser/Thr protein kinase family. I-kappa-B kinase subfamily. As to quaternary structure, component of the I-kappa-B-kinase (IKK) core complex consisting of CHUK, IKBKB and IKBKG; probably four alpha/CHUK-beta/IKBKB dimers are associated with four gamma/IKBKG subunits. The IKK core complex seems to associate with regulatory or adapter proteins to form a IKK-signalosome holo-complex. The IKK complex associates with TERF2IP/RAP1, leading to promote IKK-mediated phosphorylation of RELA/p65. Part of a complex composed of NCOA2, NCOA3, CHUK/IKKA, IKBKB, IKBKG and CREBBP. Part of a 70-90 kDa complex at least consisting of CHUK/IKKA, IKBKB, NFKBIA, RELA, ELP1 and MAP3K14. Found in a membrane raft complex, at least composed of BCL10, CARD11, DPP4 and IKBKB. Interacts with SQSTM1 through PRKCZ or PRKCI. Forms an NGF-induced complex with IKBKB, PRKCI and TRAF6. May interact with MAVS/IPS1. Interacts with NALP2. Interacts with TICAM1. Interacts with FAF1; the interaction disrupts the IKK complex formation. Interacts with ATM. Part of a ternary complex consisting of TANK, IKBKB and IKBKG. Interacts with NIBP; the interaction is direct. Interacts with ARRB1 and ARRB2. Interacts with TRIM21. Interacts with NLRC5; prevents IKBKB phosphorylation and kinase activity. Interacts with PDPK1. Interacts with EIF2AK2/PKR. The phosphorylated form interacts with PPM1A and PPM1B. Interacts with ZNF268 isoform 2; the interaction is further increased in a TNF-alpha-dependent manner. Interacts with IKBKE. Interacts with ZC3H12A. Interacts with AKAP13. Interacts with LRRC14; disrupts IKBKB-IKBKG interaction preventing I-kappa-B-kinase (IKK) core complex formation and leading to a decrease of IKBKB phosphorylation and NF-kappaB activation. Interacts with SASH1. Interacts with ARFIP2. Interacts with FKBP5. Interacts with kinase TBK1; the complex interacts with STAT1, leading to phosphorylation of STAT1 on 'Thr-748' by IKBKB. In terms of processing, upon cytokine stimulation, phosphorylated on Ser-177 and Ser-181 by MEKK1 and/or MAP3K14/NIK as well as TBK1 and PRKCZ; which enhances activity. Phosphorylated by MAP3K7/TAK1 in response to NOD1 and NOD2 signaling, promoting activation and phosphorylation of NF-kappa-B inhibitors, leading to NF-kappa-B activation. Once activated, autophosphorylates on the C-terminal serine cluster; which decreases activity and prevents prolonged activation of the inflammatory response. Phosphorylated by the IKK-related kinases TBK1 and IKBKE, which is associated with reduced CHUK/IKKA and IKBKB activity and NF-kappa-B-dependent gene transcription. Dephosphorylated at Ser-177 and Ser-181 by PPM1A and PPM1B. Ubiquitinated. Monoubiquitination involves TRIM21 that leads to inhibition of Tax-induced NF-kappa-B signaling. 'Ser-163' may not serve as a monoubiquitination site. Ubiquitination on 'Ser-163' may modulate phosphorylation on C-terminal serine residues. Post-translationally, hydroxylated by PHD1/EGLN2, loss of hydroxylation under hypoxic conditions results in activation of NF-kappa-B. As to expression, detected in heart (at protein level). Expressed in liver, kidney and spleen.

The protein localises to the cytoplasm. It localises to the nucleus. Its subcellular location is the membrane raft. It carries out the reaction L-seryl-[I-kappa-B protein] + ATP = O-phospho-L-seryl-[I-kappa-B protein] + ADP + H(+). The enzyme catalyses L-seryl-[protein] + ATP = O-phospho-L-seryl-[protein] + ADP + H(+). It catalyses the reaction L-threonyl-[protein] + ATP = O-phospho-L-threonyl-[protein] + ADP + H(+). Serine kinase that plays an essential role in the NF-kappa-B signaling pathway which is activated by multiple stimuli such as inflammatory cytokines, bacterial or viral products, DNA damages or other cellular stresses. Acts as a part of the canonical IKK complex in the conventional pathway of NF-kappa-B activation. Phosphorylates inhibitors of NF-kappa-B on 2 critical serine residues. These modifications allow polyubiquitination of the inhibitors and subsequent degradation by the proteasome. In turn, free NF-kappa-B is translocated into the nucleus and activates the transcription of hundreds of genes involved in immune response, growth control, or protection against apoptosis. In addition to the NF-kappa-B inhibitors, phosphorylates several other components of the signaling pathway including NEMO/IKBKG, NF-kappa-B subunits RELA and NFKB1, as well as IKK-related kinases TBK1 and IKBKE. IKK-related kinase phosphorylations may prevent the overproduction of inflammatory mediators since they exert a negative regulation on canonical IKKs. Phosphorylates FOXO3, mediating the TNF-dependent inactivation of this pro-apoptotic transcription factor. Also phosphorylates other substrates including NAA10, NCOA3, BCL10 and IRS1. Phosphorylates RIPK1 at 'Ser-25' which represses its kinase activity and consequently prevents TNF-mediated RIPK1-dependent cell death. Phosphorylates the C-terminus of IRF5, stimulating IRF5 homodimerization and translocation into the nucleus. Following bacterial lipopolysaccharide (LPS)-induced TLR4 endocytosis, phosphorylates STAT1 at 'Thr-748' which restricts interferon signaling and anti-inflammatory responses and promotes innate inflammatory responses. IKBKB-mediated phosphorylation of STAT1 at 'Thr-748' promotes binding of STAT1 to the ARID5A promoter, resulting in transcriptional activation of ARID5A and subsequent ARID5A-mediated stabilization of IL6. It also promotes binding of STAT1 to the IL12B promoter and activation of IL12B transcription. The chain is Inhibitor of nuclear factor kappa-B kinase subunit beta (Ikbkb) from Mus musculus (Mouse).